The chain runs to 198 residues: Ribonuclease HII (198 aa).

Residues 3-198 form the RNase H type-2 domain; the sequence is LSVGGIDEAG…SWETVGKLFK (196 aa). Residues aspartate 9, glutamate 10, and aspartate 104 each contribute to the a divalent metal cation site.

It belongs to the RNase HII family. It depends on Mn(2+) as a cofactor. Mg(2+) serves as cofactor.

Its subcellular location is the cytoplasm. The catalysed reaction is Endonucleolytic cleavage to 5'-phosphomonoester.. In terms of biological role, endonuclease that specifically degrades the RNA of RNA-DNA hybrids. This chain is Ribonuclease HII, found in Pyrobaculum arsenaticum (strain DSM 13514 / JCM 11321 / PZ6).